Consider the following 143-residue polypeptide: Submaxillary gland androgen-regulated protein 2, isoform delta (143 aa).

Positions 1 to 22 are cleaved as a signal peptide; it reads MKPLCLVFGLCVLIGCFLSSEC. Disordered regions lie at residues 28–52 and 116–143; these read GQHD…PDPN and VPRK…TDSF. 2 stretches are compositionally biased toward polar residues: residues 36–45 and 122–143; these read LSPSNPSSHF and NATP…TDSF.

The protein localises to the secreted. Functionally, may play a role in protection or detoxification. The polypeptide is Submaxillary gland androgen-regulated protein 2, isoform delta (Smr2) (Mus musculus (Mouse)).